The chain runs to 428 residues: Chaperone SurA (428 aa).

The first 13 residues, 1-13, serve as a signal peptide directing secretion; sequence MLGALLLSGAVHA. 2 PpiC domains span residues 164–265 and 276–375; these read SEEF…KLLE and RDEV…EVLG.

It localises to the periplasm. It carries out the reaction [protein]-peptidylproline (omega=180) = [protein]-peptidylproline (omega=0). Its function is as follows. Chaperone involved in the correct folding and assembly of outer membrane proteins. Recognizes specific patterns of aromatic residues and the orientation of their side chains, which are found more frequently in integral outer membrane proteins. May act in both early periplasmic and late outer membrane-associated steps of protein maturation. This Pseudomonas syringae pv. tomato (strain ATCC BAA-871 / DC3000) protein is Chaperone SurA.